Reading from the N-terminus, the 94-residue chain is Acylphosphatase (94 aa).

The Acylphosphatase-like domain occupies 5–94 (RLTAFVHGHV…PRDVEGFVER (90 aa)). Active-site residues include arginine 20 and asparagine 38.

This sequence belongs to the acylphosphatase family.

The enzyme catalyses an acyl phosphate + H2O = a carboxylate + phosphate + H(+). In Corynebacterium glutamicum (strain R), this protein is Acylphosphatase (acyP).